Consider the following 26-residue polypeptide: Hainantoxin F1-31.97 (26 aa).

2 disulfide bridges follow: Cys2/Cys16 and Cys9/Cys21.

The protein belongs to the neurotoxin 10 (Hwtx-1) family. 17 (Hntx-9) subfamily. In terms of tissue distribution, expressed by the venom gland.

Its subcellular location is the secreted. Ion channel inhibitor. The sequence is that of Hainantoxin F1-31.97 from Cyriopagopus hainanus (Chinese bird spider).